A 511-amino-acid chain; its full sequence is Dopamine receptor 1 (511 aa).

The N-terminal stretch at 1–19 (MYTPHPFGFLIILVPMTNA) is a signal peptide. Topologically, residues 20-142 (MRAIAAIAAG…EEPEPLSLVS (123 aa)) are extracellular. 5 N-linked (GlcNAc...) asparagine glycosylation sites follow: Asn53, Asn63, Asn74, Asn117, and Asn123. Residues 143–169 (IVVVGIFLSVLIFLSVAGNILVCLAIY) traverse the membrane as a helical segment. The Cytoplasmic portion of the chain corresponds to 170 to 179 (TERSLRRIGN). Residues 180 to 206 (LFLASLAIADLFVASLVMTFAGVNDLL) form a helical membrane-spanning segment. The Extracellular portion of the chain corresponds to 207-216 (GYWIFGAQFC). Residues Cys216 and Cys302 are joined by a disulfide bond. Residues 217-239 (DTWVAFDVMCSTASILNLCAISM) form a helical membrane-spanning segment. Over 240–258 (DRYIHIKDPLRYGRWVTRR) the chain is Cytoplasmic. The chain crosses the membrane as a helical span at residues 259 to 279 (VAVITIAAIWLLAAFVSFVPI). The Extracellular segment spans residues 280–310 (SLGIHRPDQPLIFEDNGKKYPTCALDLTPTY). Residues 311–331 (AVVSSCISFYFPCVVMIGIYC) form a helical membrane-spanning segment. At 332 to 391 (RLYCYAQKHVKSIKAVTRPGEVAEKQRYKSIRRPKNQPKKFKVRNLHTHSSPYHVSDHKA) the chain is on the cytoplasmic side. A helical transmembrane segment spans residues 392–412 (AVTVGVIMGVFLICWVPFFCV). Topologically, residues 413 to 427 (NITAAFCKTCIGGQT) are extracellular. The helical transmembrane segment at 428-450 (FKILTWLGYSNSAFNPIIYSIFN) threads the bilayer. At 451–511 (KEFRDAFKRI…SAELEQVSAI (61 aa)) the chain is on the cytoplasmic side. 2 S-palmitoyl cysteine lipidation sites follow: Cys468 and Cys469.

Belongs to the G-protein coupled receptor 1 family. Expressed in the larval and adult CNS in structures that mediate higher-order brain functions such as learning, memory and motor control: in the mushroom body neuropil and four unpaired neurons in each thoracic segment. The adult CNS has intense expression in the central complex, moderate expression in several neurosecretory cells, and weak expression in two unpaired neurons in the mesothoracic neuromere. Also seen in the somata of the optic lobes.

It is found in the cell membrane. In terms of biological role, receptor for dopamine. The activity of this receptor is mediated by G proteins which activate adenylyl cyclase. Might be involved in the processing of visual information and/or visual learning. Important for Pavlovian conditioning: required in the mushroom body as a receptor conveying unconditional stimuli information, has a role in memory formation for aversive and appetitive learning. Sleep-deprivation-induced impairments in learning can be partially explained through alterations in dopamine signaling, Dop1R1 expression levels are reduced; sleep may have a role in restoring dopamine homeostasis. This Drosophila melanogaster (Fruit fly) protein is Dopamine receptor 1 (Dop1R1).